We begin with the raw amino-acid sequence, 261 residues long: Small ribosomal subunit protein eS4z (261 aa).

The S4 RNA-binding domain occupies 42 to 104 (LPLVLIIRNR…TNENFRLLYD (63 aa)).

The protein belongs to the eukaryotic ribosomal protein eS4 family.

The protein localises to the cytoplasm. The chain is Small ribosomal subunit protein eS4z (RPS4A) from Arabidopsis thaliana (Mouse-ear cress).